Consider the following 226-residue polypeptide: Thymidylate kinase (226 aa).

Residue 12–19 participates in ATP binding; it reads GIDGAGKS.

The protein belongs to the thymidylate kinase family.

It carries out the reaction dTMP + ATP = dTDP + ADP. Phosphorylation of dTMP to form dTDP in both de novo and salvage pathways of dTTP synthesis. In Verminephrobacter eiseniae (strain EF01-2), this protein is Thymidylate kinase.